The chain runs to 188 residues: Preprocaerulein type-1 (188 aa).

A signal peptide spans 1–26 (MFKGILLCVLFAVLSANPLSQPEGFA). The propeptide occupies 27–170 (DEERDVRGLA…ANDERRFADG (144 aa)). Positions 152–188 (LGGSPQQREANDERRFADGQQDYTGWMDFGRRNGEDD) are disordered. Tyr-174 is modified (sulfotyrosine). Phe-180 carries the post-translational modification Phenylalanine amide. Residues 184-188 (NGEDD) constitute a propeptide that is removed on maturation.

This sequence belongs to the gastrin/cholecystokinin family. Expressed by the skin glands.

The protein resides in the secreted. Functionally, the pharmacological activities of caerulein are quite similar to the physiological activities of gastrin and related peptides. The protein is Preprocaerulein type-1 of Xenopus laevis (African clawed frog).